A 613-amino-acid polypeptide reads, in one-letter code: Epsin-2 (613 aa).

Positions 11 to 143 (NMMKGYSSTQ…NDEERLREER (133 aa)) constitute an ENTH domain. Disordered regions lie at residues 140–208 (REER…DDED), 323–351 (TAAN…PFSM), and 356–375 (RQKQ…EARQ). Residues 148–167 (RNRRANRAARPRPRRQRTRS) are compositionally biased toward basic residues. Phosphothreonine is present on threonine 165. A Phosphoserine modification is found at serine 167. UIM domains are found at residues 175 to 194 (SYQD…AQED) and 206 to 225 (DEDP…EELK). A compositionally biased stretch (basic and acidic residues) spans 179 to 188 (DLEKALEESR). A compositionally biased stretch (low complexity) spans 323-339 (TAANMQQQQQQPADFQQ). The span at 340-350 (PLPTGSNNPFS) shows a compositional bias: polar residues. Lysine 426 participates in a covalent cross-link: Glycyl lysine isopeptide (Lys-Gly) (interchain with G-Cter in ubiquitin). Threonine 430 carries the phosphothreonine modification. Serine 434 is subject to Phosphoserine. 3 positions are modified to phosphothreonine: threonine 450, threonine 468, and threonine 470. Residues 471-512 (GTFINSQGTGYKQVTNEPKNNPFLSNQYTGLPSTNIVPTQTG) show a composition bias toward polar residues. Positions 471–613 (GTFINSQGTG…PDQGVSLIDL (143 aa)) are disordered. The span at 526–600 (SPQQNPTGIS…QQQQQQQQQQ (75 aa)) shows a compositional bias: low complexity.

Belongs to the epsin family. Post-translationally, phosphorylated by PRK1.

It is found in the cytoplasm. It localises to the membrane. Its function is as follows. Binds to membranes enriched in phosphatidylinositol 3,5-bisphosphate (PtdIns(3,5)P2) and phosphatidylinositol 4,5-bisphosphate (PtdIns(4,5)P2). Required for endocytosis and localization of actin. The chain is Epsin-2 (ENT2) from Saccharomyces cerevisiae (strain ATCC 204508 / S288c) (Baker's yeast).